The chain runs to 1076 residues: Guanylyl cyclase C (1076 aa).

An N-terminal signal peptide occupies residues 1–23; it reads MKSPLLGLVVWSLLLQLLQPGLA. Residues 24 to 433 lie on the Extracellular side of the membrane; that stretch reads FWNSQISQNC…PHDIPGLGPH (410 aa). N-linked (GlcNAc...) asparagine glycosylation is found at N35, N82, N191, N198, N287, N306, N310, N348, and N405. A helical transmembrane segment spans residues 434 to 457; sequence ILLIAVCTLAGVVVLILLIALLVL. The Cytoplasmic portion of the chain corresponds to 458 to 1076; sequence RKYKKDNELR…NTTDQDSTYF (619 aa). In terms of domain architecture, Protein kinase spans 492–752; it reads LKIDDDKKRD…KIENTLAKIF (261 aa). In terms of domain architecture, Guanylate cyclase spans 827 to 957; that stretch reads TVYFSDIVGF…DTVNTASRME (131 aa).

The protein belongs to the adenylyl cyclase class-4/guanylyl cyclase family. As to quaternary structure, homotrimer. Interacts via its C-terminal region with NHERF4. Interacts with the lectin chaperone VIP36. Glycosylation at Asn-62 is required for interaction with VIP36 while glycosylation at Asn-348 and Asn-405 modulates ligand-mediated GC-C activation.

Its subcellular location is the cell membrane. The protein resides in the endoplasmic reticulum membrane. The enzyme catalyses GTP = 3',5'-cyclic GMP + diphosphate. In terms of biological role, guanylyl cyclase that catalyzes synthesis of cyclic GMP (cGMP) from GTP. The sequence is that of Guanylyl cyclase C (GUCY2C) from Cavia porcellus (Guinea pig).